A 436-amino-acid chain; its full sequence is 3-ketoacyl-CoA thiolase (436 aa).

Cysteine 99 acts as the Acyl-thioester intermediate in catalysis. Active-site proton acceptor residues include histidine 392 and cysteine 422.

The protein belongs to the thiolase-like superfamily. Thiolase family. In terms of assembly, heterotetramer of two alpha chains (FadJ) and two beta chains (FadI).

The protein localises to the cytoplasm. It catalyses the reaction an acyl-CoA + acetyl-CoA = a 3-oxoacyl-CoA + CoA. The protein operates within lipid metabolism; fatty acid beta-oxidation. Functionally, catalyzes the final step of fatty acid oxidation in which acetyl-CoA is released and the CoA ester of a fatty acid two carbons shorter is formed. This Salmonella newport (strain SL254) protein is 3-ketoacyl-CoA thiolase.